The chain runs to 805 residues: Leucine--tRNA ligase (805 aa).

The 'HIGH' region motif lies at 40–51 (PYPSGAGLHVGH). A 'KMSKS' region motif is present at residues 576–580 (KMSKS). K579 contributes to the ATP binding site.

This sequence belongs to the class-I aminoacyl-tRNA synthetase family.

Its subcellular location is the cytoplasm. It catalyses the reaction tRNA(Leu) + L-leucine + ATP = L-leucyl-tRNA(Leu) + AMP + diphosphate. The polypeptide is Leucine--tRNA ligase (Geobacillus kaustophilus (strain HTA426)).